A 48-amino-acid polypeptide reads, in one-letter code: Large ribosomal subunit protein bL32c (48 aa).

The protein belongs to the bacterial ribosomal protein bL32 family.

Its subcellular location is the plastid. It localises to the chloroplast. This Vicia faba (Broad bean) protein is Large ribosomal subunit protein bL32c (rpl32).